Consider the following 208-residue polypeptide: Methylthioribulose-1-phosphate dehydratase (208 aa).

Zn(2+)-binding residues include H101 and H103.

Belongs to the aldolase class II family. MtnB subfamily. The cofactor is Zn(2+).

It carries out the reaction 5-(methylsulfanyl)-D-ribulose 1-phosphate = 5-methylsulfanyl-2,3-dioxopentyl phosphate + H2O. Its pathway is amino-acid biosynthesis; L-methionine biosynthesis via salvage pathway; L-methionine from S-methyl-5-thio-alpha-D-ribose 1-phosphate: step 2/6. Functionally, catalyzes the dehydration of methylthioribulose-1-phosphate (MTRu-1-P) into 2,3-diketo-5-methylthiopentyl-1-phosphate (DK-MTP-1-P). The chain is Methylthioribulose-1-phosphate dehydratase from Gluconobacter oxydans (strain 621H) (Gluconobacter suboxydans).